We begin with the raw amino-acid sequence, 367 residues long: Isoflavone 4'-O-methyltransferase (367 aa).

S-adenosyl-L-methionine-binding positions include 209–212 (VGGG), D233, 233–234 (DQ), 253–254 (DM), and K267. H271 (proton acceptor) is an active-site residue.

It belongs to the class I-like SAM-binding methyltransferase superfamily. Cation-independent O-methyltransferase family. COMT subfamily.

The catalysed reaction is a 4'-hydroxyisoflavone + S-adenosyl-L-methionine = a 4'-methoxyisoflavone + S-adenosyl-L-homocysteine + H(+). It carries out the reaction (2R,3S)-2,4',7-trihydroxyisoflavanone + S-adenosyl-L-methionine = (2R,3S)-2,7-dihydroxy-4'-methoxyisoflavanone + S-adenosyl-L-homocysteine + H(+). In terms of biological role, 2-hydroxyisoflavanone 4'-O-methyltransferase involved in the biosynthesis of formononetin. Can use 2,7,4'-trihydroxyisoflavanone, (+)-6a-hydroxymaackiain or medicarpin as substrate, but not daidzein or (-)-6a-hydroxymaackiain. This Glycyrrhiza echinata (Licorice) protein is Isoflavone 4'-O-methyltransferase (HI4'OMT).